We begin with the raw amino-acid sequence, 220 residues long: Respiratory supercomplex factor 1, mitochondrial (220 aa).

One can recognise an HIG1 domain in the interval 13–104 (MPSSFDENHE…KDREATKELR (92 aa)). 2 helical membrane passes run 41-57 (LIPLGAGLTVFAFTQAW) and 76-93 (VAAQGFTVLAMIAGSMYY). Residues 91–145 (MYYNKDREATKELRKLKEERDSEEKRQKWIRELEIRDEEDKAMRARVMNRRAKAE) are a coiled coil. The disordered stretch occupies residues 139–220 (NRRAKAEEAK…RVSAEDDKTN (82 aa)). Residues 164 to 179 (SGVLNALGLSGSSSGW) show a composition bias toward low complexity.

Belongs to the RCF1 family. Associates with the respiratory chain complex III/complex IV supercomplex.

Its subcellular location is the mitochondrion membrane. Its function is as follows. Cytochrome c oxidase subunit which plays a role in assembly of respiratory supercomplexes. The protein is Respiratory supercomplex factor 1, mitochondrial (RCF1) of Verticillium alfalfae (strain VaMs.102 / ATCC MYA-4576 / FGSC 10136) (Verticillium wilt of alfalfa).